The chain runs to 602 residues: Glutamyl-tRNA(Gln) amidotransferase subunit B, mitochondrial (602 aa).

Residues 1-52 constitute a mitochondrion transit peptide; that stretch reads MLQQWLRQSPAAAGLLRCSRYRGPQAALLQLSPQRAPTYHAIRSLQTSAAES. The segment at 61-83 is disordered; sequence QLKQGAKGLKAQKRQRRESEEAS.

The protein belongs to the GatB/GatE family. GatB subfamily. Subunit of the heterotrimeric GatCAB amidotransferase (AdT) complex, composed of A, B and C subunits.

The protein localises to the mitochondrion. The enzyme catalyses L-glutamyl-tRNA(Gln) + L-glutamine + ATP + H2O = L-glutaminyl-tRNA(Gln) + L-glutamate + ADP + phosphate + H(+). Functionally, allows the formation of correctly charged Gln-tRNA(Gln) through the transamidation of misacylated Glu-tRNA(Gln) in the mitochondria. The reaction takes place in the presence of glutamine and ATP through an activated gamma-phospho-Glu-tRNA(Gln). The protein is Glutamyl-tRNA(Gln) amidotransferase subunit B, mitochondrial of Aspergillus clavatus (strain ATCC 1007 / CBS 513.65 / DSM 816 / NCTC 3887 / NRRL 1 / QM 1276 / 107).